The sequence spans 190 residues: Imidazoleglycerol-phosphate dehydratase (190 aa).

Belongs to the imidazoleglycerol-phosphate dehydratase family.

The protein resides in the cytoplasm. The enzyme catalyses D-erythro-1-(imidazol-4-yl)glycerol 3-phosphate = 3-(imidazol-4-yl)-2-oxopropyl phosphate + H2O. It participates in amino-acid biosynthesis; L-histidine biosynthesis; L-histidine from 5-phospho-alpha-D-ribose 1-diphosphate: step 6/9. The chain is Imidazoleglycerol-phosphate dehydratase from Methanococcus vannielii (strain ATCC 35089 / DSM 1224 / JCM 13029 / OCM 148 / SB).